Consider the following 281-residue polypeptide: Pantothenate synthetase (281 aa).

An ATP-binding site is contributed by 30 to 37 (MGNLHAGH). H37 functions as the Proton donor in the catalytic mechanism. Q61 provides a ligand contact to (R)-pantoate. Residue Q61 participates in beta-alanine binding. 149–152 (GRKD) contributes to the ATP binding site. A (R)-pantoate-binding site is contributed by Q155. Residues V178 and 186–189 (MSSR) contribute to the ATP site.

The protein belongs to the pantothenate synthetase family. Homodimer.

The protein resides in the cytoplasm. The catalysed reaction is (R)-pantoate + beta-alanine + ATP = (R)-pantothenate + AMP + diphosphate + H(+). It participates in cofactor biosynthesis; (R)-pantothenate biosynthesis; (R)-pantothenate from (R)-pantoate and beta-alanine: step 1/1. In terms of biological role, catalyzes the condensation of pantoate with beta-alanine in an ATP-dependent reaction via a pantoyl-adenylate intermediate. The chain is Pantothenate synthetase from Shewanella amazonensis (strain ATCC BAA-1098 / SB2B).